The primary structure comprises 250 residues: 1-(5-phosphoribosyl)-5-[(5-phosphoribosylamino)methylideneamino] imidazole-4-carboxamide isomerase (250 aa).

Residue D12 is the Proton acceptor of the active site. The active-site Proton donor is the D134.

The protein belongs to the HisA/HisF family.

It is found in the cytoplasm. The catalysed reaction is 1-(5-phospho-beta-D-ribosyl)-5-[(5-phospho-beta-D-ribosylamino)methylideneamino]imidazole-4-carboxamide = 5-[(5-phospho-1-deoxy-D-ribulos-1-ylimino)methylamino]-1-(5-phospho-beta-D-ribosyl)imidazole-4-carboxamide. It functions in the pathway amino-acid biosynthesis; L-histidine biosynthesis; L-histidine from 5-phospho-alpha-D-ribose 1-diphosphate: step 4/9. This Actinobacillus pleuropneumoniae serotype 3 (strain JL03) protein is 1-(5-phosphoribosyl)-5-[(5-phosphoribosylamino)methylideneamino] imidazole-4-carboxamide isomerase.